A 496-amino-acid chain; its full sequence is Lysine--tRNA ligase (496 aa).

Mg(2+)-binding residues include Glu408 and Glu415.

The protein belongs to the class-II aminoacyl-tRNA synthetase family. As to quaternary structure, homodimer. The cofactor is Mg(2+).

The protein localises to the cytoplasm. It carries out the reaction tRNA(Lys) + L-lysine + ATP = L-lysyl-tRNA(Lys) + AMP + diphosphate. This chain is Lysine--tRNA ligase, found in Legionella pneumophila (strain Paris).